A 103-amino-acid chain; its full sequence is Small ribosomal subunit protein uS10 (103 aa).

It belongs to the universal ribosomal protein uS10 family. In terms of assembly, part of the 30S ribosomal subunit.

Involved in the binding of tRNA to the ribosomes. The chain is Small ribosomal subunit protein uS10 from Neisseria gonorrhoeae (strain ATCC 700825 / FA 1090).